We begin with the raw amino-acid sequence, 108 residues long: Large ribosomal subunit protein uL22 (108 aa).

This sequence belongs to the universal ribosomal protein uL22 family. Part of the 50S ribosomal subunit.

In terms of biological role, this protein binds specifically to 23S rRNA; its binding is stimulated by other ribosomal proteins, e.g. L4, L17, and L20. It is important during the early stages of 50S assembly. It makes multiple contacts with different domains of the 23S rRNA in the assembled 50S subunit and ribosome. The globular domain of the protein is located near the polypeptide exit tunnel on the outside of the subunit, while an extended beta-hairpin is found that lines the wall of the exit tunnel in the center of the 70S ribosome. This is Large ribosomal subunit protein uL22 from Desulfatibacillum aliphaticivorans.